The chain runs to 177 residues: Large ribosomal subunit protein uL6 (177 aa).

The protein belongs to the universal ribosomal protein uL6 family. In terms of assembly, part of the 50S ribosomal subunit.

This protein binds to the 23S rRNA, and is important in its secondary structure. It is located near the subunit interface in the base of the L7/L12 stalk, and near the tRNA binding site of the peptidyltransferase center. The chain is Large ribosomal subunit protein uL6 from Serratia proteamaculans (strain 568).